The primary structure comprises 570 residues: Proline--tRNA ligase (570 aa).

Positions 238–257 (ARPAPAEHAEPRPLEKVETP) are disordered.

Belongs to the class-II aminoacyl-tRNA synthetase family. ProS type 1 subfamily. As to quaternary structure, homodimer.

It localises to the cytoplasm. The catalysed reaction is tRNA(Pro) + L-proline + ATP = L-prolyl-tRNA(Pro) + AMP + diphosphate. In terms of biological role, catalyzes the attachment of proline to tRNA(Pro) in a two-step reaction: proline is first activated by ATP to form Pro-AMP and then transferred to the acceptor end of tRNA(Pro). As ProRS can inadvertently accommodate and process non-cognate amino acids such as alanine and cysteine, to avoid such errors it has two additional distinct editing activities against alanine. One activity is designated as 'pretransfer' editing and involves the tRNA(Pro)-independent hydrolysis of activated Ala-AMP. The other activity is designated 'posttransfer' editing and involves deacylation of mischarged Ala-tRNA(Pro). The misacylated Cys-tRNA(Pro) is not edited by ProRS. The polypeptide is Proline--tRNA ligase (Geobacter sulfurreducens (strain ATCC 51573 / DSM 12127 / PCA)).